The primary structure comprises 208 residues: Small ribosomal subunit protein uS4 (208 aa).

The region spanning 98-161 is the S4 RNA-binding domain; the sequence is RRLDNTIYRL…RQSPIILEAQ (64 aa).

This sequence belongs to the universal ribosomal protein uS4 family. As to quaternary structure, part of the 30S ribosomal subunit. Contacts protein S5. The interaction surface between S4 and S5 is involved in control of translational fidelity.

Functionally, one of the primary rRNA binding proteins, it binds directly to 16S rRNA where it nucleates assembly of the body of the 30S subunit. With S5 and S12 plays an important role in translational accuracy. This is Small ribosomal subunit protein uS4 from Solidesulfovibrio magneticus (strain ATCC 700980 / DSM 13731 / RS-1) (Desulfovibrio magneticus).